Reading from the N-terminus, the 469-residue chain is D-3-phosphoglycerate dehydrogenase 1 (469 aa).

Phosphoserine occurs at positions 22, 29, and 33. Residues 208–209 (HI), Asp-228, 285–287 (ASR), and Asp-311 each bind NAD(+). Arg-287 is an active-site residue. Residue Glu-316 is part of the active site. The active-site Proton donor is His-347. 347–350 (HIGG) is an NAD(+) binding site. Residues 399–469 (RVLYIHQNVP…SAKISIRLLY (71 aa)) form the ACT domain.

The protein belongs to the D-isomer specific 2-hydroxyacid dehydrogenase family.

The catalysed reaction is (2R)-3-phosphoglycerate + NAD(+) = 3-phosphooxypyruvate + NADH + H(+). It carries out the reaction (R)-2-hydroxyglutarate + NAD(+) = 2-oxoglutarate + NADH + H(+). Its pathway is amino-acid biosynthesis; L-serine biosynthesis; L-serine from 3-phospho-D-glycerate: step 1/3. Functionally, catalyzes the reversible oxidation of 3-phospho-D-glycerate to 3-phosphonooxypyruvate, the first step of the phosphorylated L-serine biosynthesis pathway. Also catalyzes the reversible oxidation of 2-hydroxyglutarate to 2-oxoglutarate. This Saccharomyces cerevisiae (strain ATCC 204508 / S288c) (Baker's yeast) protein is D-3-phosphoglycerate dehydrogenase 1 (SER3).